A 498-amino-acid chain; its full sequence is Probable cytosol aminopeptidase (498 aa).

Residues K264 and D269 each contribute to the Mn(2+) site. Residue K276 is part of the active site. The Mn(2+) site is built by D287, D346, and E348. The active site involves R350.

The protein belongs to the peptidase M17 family. It depends on Mn(2+) as a cofactor.

Its subcellular location is the cytoplasm. The enzyme catalyses Release of an N-terminal amino acid, Xaa-|-Yaa-, in which Xaa is preferably Leu, but may be other amino acids including Pro although not Arg or Lys, and Yaa may be Pro. Amino acid amides and methyl esters are also readily hydrolyzed, but rates on arylamides are exceedingly low.. It carries out the reaction Release of an N-terminal amino acid, preferentially leucine, but not glutamic or aspartic acids.. In terms of biological role, presumably involved in the processing and regular turnover of intracellular proteins. Catalyzes the removal of unsubstituted N-terminal amino acids from various peptides. The chain is Probable cytosol aminopeptidase from Xanthobacter autotrophicus (strain ATCC BAA-1158 / Py2).